Consider the following 521-residue polypeptide: Bifunctional purine biosynthesis protein PurH (521 aa).

An MGS-like domain is found at 1–147 (MAKITRALIS…KNNADVTVLV (147 aa)).

The protein belongs to the PurH family.

It catalyses the reaction (6R)-10-formyltetrahydrofolate + 5-amino-1-(5-phospho-beta-D-ribosyl)imidazole-4-carboxamide = 5-formamido-1-(5-phospho-D-ribosyl)imidazole-4-carboxamide + (6S)-5,6,7,8-tetrahydrofolate. The catalysed reaction is IMP + H2O = 5-formamido-1-(5-phospho-D-ribosyl)imidazole-4-carboxamide. It participates in purine metabolism; IMP biosynthesis via de novo pathway; 5-formamido-1-(5-phospho-D-ribosyl)imidazole-4-carboxamide from 5-amino-1-(5-phospho-D-ribosyl)imidazole-4-carboxamide (10-formyl THF route): step 1/1. Its pathway is purine metabolism; IMP biosynthesis via de novo pathway; IMP from 5-formamido-1-(5-phospho-D-ribosyl)imidazole-4-carboxamide: step 1/1. This chain is Bifunctional purine biosynthesis protein PurH, found in Geobacter sulfurreducens (strain ATCC 51573 / DSM 12127 / PCA).